The sequence spans 883 residues: Phosphoenolpyruvate carboxylase (883 aa).

Residues His-138 and Lys-546 contribute to the active site.

This sequence belongs to the PEPCase type 1 family. Mg(2+) serves as cofactor.

The enzyme catalyses oxaloacetate + phosphate = phosphoenolpyruvate + hydrogencarbonate. Forms oxaloacetate, a four-carbon dicarboxylic acid source for the tricarboxylic acid cycle. This Escherichia coli (strain 55989 / EAEC) protein is Phosphoenolpyruvate carboxylase.